The sequence spans 475 residues: Protein FIZZY-RELATED 1 (475 aa).

A disordered region spans residues 1-27 (MEEDESTTPKKKSDSQLNLPPSMNRPT). The segment covering 15–27 (SQLNLPPSMNRPT) has biased composition (polar residues). WD repeat units lie at residues 166–203 (QDDF…VTKL), 207–246 (GVDE…NIRT), 249–289 (GHRL…SKLK), 290–329 (GHKS…PVLR), 332–374 (EHAA…HLNC), 376–417 (DTNS…KLAT), and 420–459 (GHSY…KSQS).

The protein belongs to the WD repeat CDC20/Fizzy family. As to quaternary structure, associates with the APC/C complex. Interacts with CDC20-1, CDC20-2, CYCA1-1, CYCA1-2, CYCA3-4, CYCB1-1 and CYCB1-2. Binds to GIG1. In terms of tissue distribution, expressed in the root tip, predominantly in the root cap, quiescent center cells, surrounding stem cells and columella.

It is found in the nucleus. It functions in the pathway protein modification; protein ubiquitination. Its function is as follows. Activator protein that regulates the ubiquitin ligase activity and substrate specificity of the anaphase promoting complex/cyclosome (APC/C). Required for meristem organization and maintenance of quiescent center identity and stem cells. The chain is Protein FIZZY-RELATED 1 (FZR1) from Arabidopsis thaliana (Mouse-ear cress).